A 92-amino-acid chain; its full sequence is Small ribosomal subunit protein uS19 (92 aa).

Belongs to the universal ribosomal protein uS19 family.

Its function is as follows. Protein S19 forms a complex with S13 that binds strongly to the 16S ribosomal RNA. The polypeptide is Small ribosomal subunit protein uS19 (Corynebacterium aurimucosum (strain ATCC 700975 / DSM 44827 / CIP 107346 / CN-1) (Corynebacterium nigricans)).